The primary structure comprises 498 residues: Aspartyl aminopeptidase (498 aa).

His-91 serves as a coordination point for Zn(2+). Substrate is bound at residue His-166. Asp-274 contributes to the Zn(2+) binding site. Glu-311 contacts substrate. Residues Glu-312 and Asp-363 each coordinate Zn(2+). The substrate site is built by Asp-363, His-366, Lys-391, and Tyr-398. His-463 provides a ligand contact to Zn(2+).

It belongs to the peptidase M18 family. Tetrahedron-shaped homododecamer built from six homodimers. Requires Zn(2+) as cofactor. Post-translationally, the N-terminus is blocked.

It carries out the reaction Release of an N-terminal aspartate or glutamate from a peptide, with a preference for aspartate.. Its activity is regulated as follows. Inhibited by zinc. Stimulated by calcium and bacitracin. In Aspergillus oryzae (strain ATCC 42149 / RIB 40) (Yellow koji mold), this protein is Aspartyl aminopeptidase (dapA).